Reading from the N-terminus, the 329-residue chain is GTP 3',8-cyclase (329 aa).

Residues 8–234 enclose the Radical SAM core domain; the sequence is AFARKFYYLR…QLRQRSDGPA (227 aa). Position 17 (Arg17) interacts with GTP. Positions 24 and 28 each coordinate [4Fe-4S] cluster. S-adenosyl-L-methionine is bound at residue Tyr30. [4Fe-4S] cluster is bound at residue Cys31. Arg68 is a GTP binding site. Gly72 serves as a coordination point for S-adenosyl-L-methionine. Residue Thr99 participates in GTP binding. Ser123 is an S-adenosyl-L-methionine binding site. Lys160 provides a ligand contact to GTP. Met194 contributes to the S-adenosyl-L-methionine binding site. [4Fe-4S] cluster contacts are provided by Cys257 and Cys260. 262–264 contributes to the GTP binding site; the sequence is RLR. A [4Fe-4S] cluster-binding site is contributed by Cys274.

It belongs to the radical SAM superfamily. MoaA family. In terms of assembly, monomer and homodimer. [4Fe-4S] cluster serves as cofactor.

It catalyses the reaction GTP + AH2 + S-adenosyl-L-methionine = (8S)-3',8-cyclo-7,8-dihydroguanosine 5'-triphosphate + 5'-deoxyadenosine + L-methionine + A + H(+). It functions in the pathway cofactor biosynthesis; molybdopterin biosynthesis. Functionally, catalyzes the cyclization of GTP to (8S)-3',8-cyclo-7,8-dihydroguanosine 5'-triphosphate. The protein is GTP 3',8-cyclase of Escherichia coli O45:K1 (strain S88 / ExPEC).